A 435-amino-acid chain; its full sequence is Cytochrome c biogenesis protein CcsB (435 aa).

A run of 3 helical transmembrane segments spans residues 11–31, 69–89, and 159–179; these read LRVA…GTAL, SDWF…CSWR, and VGPL…VWGV.

The protein belongs to the Ccs1/CcsB family. May interact with CcsA.

The protein localises to the plastid. The protein resides in the organellar chromatophore thylakoid membrane. Its function is as follows. Required during biogenesis of c-type cytochromes (cytochrome c6 and cytochrome f) at the step of heme attachment. The polypeptide is Cytochrome c biogenesis protein CcsB (Paulinella chromatophora).